We begin with the raw amino-acid sequence, 314 residues long: Homoserine kinase (314 aa).

95–105 lines the ATP pocket; the sequence is PHSRGLGSSAS.

Belongs to the GHMP kinase family. Homoserine kinase subfamily.

The protein localises to the cytoplasm. It catalyses the reaction L-homoserine + ATP = O-phospho-L-homoserine + ADP + H(+). It functions in the pathway amino-acid biosynthesis; L-threonine biosynthesis; L-threonine from L-aspartate: step 4/5. Its function is as follows. Catalyzes the ATP-dependent phosphorylation of L-homoserine to L-homoserine phosphate. The chain is Homoserine kinase from Rhodococcus opacus (strain B4).